Reading from the N-terminus, the 329-residue chain is CDP-diacylglycerol--glycerol-3-phosphate 3-phosphatidyltransferase 1, chloroplastic (329 aa).

The transit peptide at 1–38 (MAFLKTLNPLLRRSPTPIPNPRSLLSLDAFLAASSPTA) directs the protein to the chloroplast. Helical transmembrane passes span 150–170 (PVIGWMIVNEWYLPAFGTLAL), 190–210 (VFGSYLDPLADKVLIGCVAIA), 217–237 (LHPGLVGLVVVRDLLLVGGAV), and 300–320 (ITVLSWLVASTTIASTVGYGI).

This sequence belongs to the CDP-alcohol phosphatidyltransferase class-I family. The cofactor is Mn(2+).

It localises to the plastid. The protein resides in the chloroplast membrane. The catalysed reaction is a CDP-1,2-diacyl-sn-glycerol + sn-glycerol 3-phosphate = a 1,2-diacyl-sn-glycero-3-phospho-(1'-sn-glycero-3'-phosphate) + CMP + H(+). The protein operates within phospholipid metabolism; phosphatidylglycerol biosynthesis; phosphatidylglycerol from CDP-diacylglycerol: step 1/2. Functionally, catalyzes the committed step to the synthesis of the acidic phospholipids. Transfers specifically a phosphatidyl group from CDP-diacylglycerol to glycerol-3-phosphate to form phosphatidylglycerophosphate. The protein is CDP-diacylglycerol--glycerol-3-phosphate 3-phosphatidyltransferase 1, chloroplastic of Oryza sativa subsp. japonica (Rice).